A 113-amino-acid chain; its full sequence is Nucleoid-associated protein CLH_3225 (113 aa).

Over residues Met-1–Asn-14 the composition is skewed to gly residues. A disordered region spans residues Met-1–Asp-31.

It belongs to the YbaB/EbfC family. Homodimer.

The protein localises to the cytoplasm. It is found in the nucleoid. Functionally, binds to DNA and alters its conformation. May be involved in regulation of gene expression, nucleoid organization and DNA protection. The chain is Nucleoid-associated protein CLH_3225 from Clostridium botulinum (strain Alaska E43 / Type E3).